We begin with the raw amino-acid sequence, 84 residues long: Large ribosomal subunit protein bL31B (84 aa).

It belongs to the bacterial ribosomal protein bL31 family. Type B subfamily. Part of the 50S ribosomal subunit.

This chain is Large ribosomal subunit protein bL31B, found in Alkalilimnicola ehrlichii (strain ATCC BAA-1101 / DSM 17681 / MLHE-1).